The following is a 2352-amino-acid chain: Cell wall alpha-1,3-glucan synthase mok12 (2352 aa).

Positions 1786–1813 are disordered; the sequence is SNDFGIREVPLSDANQSSQADSTSIDRY. The segment covering 1798–1813 has biased composition (polar residues); that stretch reads DANQSSQADSTSIDRY.

The protein belongs to the glycosyltransferase group 1 family.

It catalyses the reaction [(1-&gt;3)-alpha-D-glucosyl](n) + UDP-alpha-D-glucose = [(1-&gt;3)-alpha-D-glucosyl](n+1) + UDP + H(+). The polypeptide is Cell wall alpha-1,3-glucan synthase mok12 (mok12) (Schizosaccharomyces pombe (strain 972 / ATCC 24843) (Fission yeast)).